The chain runs to 493 residues: MAKLLMIQGTSSNCGKSLIVTALCRITKNRGIKVAPFKAQNMSLQSFITEDGGEIGLAQAIQAEAAGVVPNVHMNPVLLKPSGQQGIQIVVHGKLYKTLNSIDFYSEKKKLWENVTDSLNYLLKEHDFLIIEGAGSPAEINLLEKDIVNMAVAEYLKAPVILVGDIDRGGVFASLYGTVKLLEKYDSLFKGFIINKFRGHVDILSPGIKKLEELINKPCLGVVPYLDETGISDEDGVSMRLINFFAQKVNAPVKIVVLRLRYISNFNDFEPLRFEPDTELMYSLKKEDLLSADIIIIPGSKKTFEDLKLLRELKIDQTLRELAKNGVEIIGICGGFQMLGEKLIDPYMVESSLREFDGIGLLPVETLFYPEKITTQVEGCLCSEPSIKITGYEIHKGITYGHLGLFKITRTSMNQTLFDGIVCGNVWGTYIHGIFESDSLRRWLINRHRVKKGLNPIDYSFSWKKLKESFIDTLANTIEKNLDINRVWEIAGL.

Residues 252–440 form the GATase cobBQ-type domain; sequence PVKIVVLRLR…IHGIFESDSL (189 aa). Residue cysteine 333 is the Nucleophile of the active site. Histidine 432 is a catalytic residue.

It belongs to the CobB/CobQ family. CobQ subfamily.

It participates in cofactor biosynthesis; adenosylcobalamin biosynthesis. Its function is as follows. Catalyzes amidations at positions B, D, E, and G on adenosylcobyrinic A,C-diamide. NH(2) groups are provided by glutamine, and one molecule of ATP is hydrogenolyzed for each amidation. The protein is Cobyric acid synthase of Thermodesulfovibrio yellowstonii (strain ATCC 51303 / DSM 11347 / YP87).